A 411-amino-acid polypeptide reads, in one-letter code: Secretion apparatus protein BsaZ (411 aa).

A run of 4 helical transmembrane segments spans residues 28 to 48, 80 to 100, 137 to 157, and 175 to 195; these read IVALIVIATGALAAPALVDLT, IAAPFVLLCAAAGALPSLVQS, ALLYVGVFALTVRVFADLYHA, and IVLTVRLVLLFLLCALPVLIL. The segment at 341-411 is disordered; that stretch reads AANRGGPPPE…APARTGDQNA (71 aa). Residues 370 to 404 show a composition bias toward low complexity; sequence DACADNAFPDDAPPGAAAPNAGSPDGPAPDGGAPA.

Belongs to the type III secretion exporter family.

It is found in the cell membrane. Its function is as follows. Part of the bsa type III secretion system, is involved in the intracellular replication of invading bacteria inside the host cell. Probably necessary for the lysis of the vacuole membrane and escape into the host cell cytoplasm. This is Secretion apparatus protein BsaZ (bsaZ) from Burkholderia pseudomallei (strain K96243).